We begin with the raw amino-acid sequence, 961 residues long: Thrombospondin-4 (961 aa).

Positions 1 to 23 are cleaved as a signal peptide; sequence MLAPRGATFLLLHLALQPWLGAG. In terms of domain architecture, Laminin G-like spans 24–192; the sequence is AQATPQVFDL…LEELKLVVRG (169 aa). Residues 286–325 enclose the EGF-like 1 domain; it reads PVRRCDSNPCFRGVRCTDTRDGFQCGPCPEGYTGNGIVCS. 21 disulfides stabilise this stretch: cysteine 290/cysteine 301, cysteine 295/cysteine 310, cysteine 313/cysteine 324, cysteine 330/cysteine 341, cysteine 335/cysteine 350, cysteine 353/cysteine 377, cysteine 383/cysteine 394, cysteine 388/cysteine 403, cysteine 406/cysteine 418, cysteine 424/cysteine 438, cysteine 432/cysteine 448, cysteine 450/cysteine 461, cysteine 477/cysteine 482, cysteine 487/cysteine 507, cysteine 523/cysteine 543, cysteine 546/cysteine 566, cysteine 582/cysteine 602, cysteine 605/cysteine 625, cysteine 643/cysteine 663, cysteine 683/cysteine 703, and cysteine 719/cysteine 940. The EGF-like 2; calcium-binding domain occupies 326–363; sequence DVDECRYHPCYPGVRCVNLAPGFRCDACPVGFTGPMMQ. The region spanning 379-419 is the EGF-like 3; calcium-binding domain; sequence DIDECRNGACVLNSICINTLGSYRCGPCKPGYIGDQMRGCK. One can recognise an EGF-like 4 domain in the interval 420-462; that stretch reads MERNCRDPELNPCSVNAQCIEERQGDVTCVCGVGWAGDGYICG. 8 TSP type-3 repeats span residues 463 to 495, 496 to 531, 532 to 554, 555 to 590, 591 to 613, 614 to 651, 652 to 691, and 692 to 727; these read KDVD…NSGQ, EDAD…NVDQ, RNSD…NNDQ, KDTD…NSDQ, EDRD…NPNQ, SDVD…NSAQ, LDTD…NPAQ, and EDSN…EVTL. The Cell attachment site signature appears at 562–564; the sequence is KGD. The disordered stretch occupies residues 581-671; the sequence is NCQKVPNSDQ…ECDDDDDNDG (91 aa). An N-linked (GlcNAc...) asparagine glycan is attached at asparagine 612. A compositionally biased stretch (polar residues) spans 640–652; sequence TDNCPTVINSAQL. The span at 660–671 shows a compositional bias: acidic residues; sequence GDECDDDDDNDG. In terms of domain architecture, TSP C-terminal spans 731 to 945; the sequence is RAYQTVVLDP…LKYRCNDTIP (215 aa). Asparagine 941 carries an N-linked (GlcNAc...) asparagine glycan.

The protein belongs to the thrombospondin family. In terms of assembly, homopentamer; disulfide-linked. Interacts with PTBP3. Interacts (via EGF-like 3; calcium-binding domain) with ATF6 and facilitates its processing, activation and nuclear translocation. Interacts with NOTCH1.

The protein localises to the endoplasmic reticulum. The protein resides in the sarcoplasmic reticulum. Its subcellular location is the secreted. It is found in the extracellular space. It localises to the extracellular matrix. Its function is as follows. Adhesive glycoprotein that mediates cell-to-cell and cell-to-matrix interactions and is involved in various processes including cellular proliferation, migration, adhesion and attachment, inflammatory response to CNS injury, regulation of vascular inflammation and adaptive responses of the heart to pressure overload and in myocardial function and remodeling. Binds to structural extracellular matrix (ECM) proteins and modulates the ECM in response to tissue damage, contributing to cardioprotective and adaptive ECM remodeling. Plays a role in ER stress response, via its interaction with the activating transcription factor 6 alpha (ATF6) which produces adaptive ER stress response factors and protects myocardium from pressure overload. May contribute to spinal presynaptic hypersensitivity and neuropathic pain states after peripheral nerve injury. May play a role in regulating protective astrogenesis from the subventricular zone (SVZ) niche after injury in a NOTCH1-dependent manner. The sequence is that of Thrombospondin-4 (THBS4) from Bos taurus (Bovine).